The chain runs to 104 residues: MAAIQGIEGVISQLQATAVGARGQETQSQPTMSFAGQLHAALDRISDRQTEARVQAEKFTLGEPGIALNDVMADMQKASVSMQMGIQVRNKLVAAYQEVMSMQV.

This sequence belongs to the FliE family.

It localises to the bacterial flagellum basal body. The protein is Flagellar hook-basal body complex protein FliE of Salmonella arizonae (strain ATCC BAA-731 / CDC346-86 / RSK2980).